A 151-amino-acid chain; its full sequence is D-aminoacyl-tRNA deacylase (151 aa).

The Gly-cisPro motif, important for rejection of L-amino acids motif lies at 142-143 (GP).

It belongs to the DTD family. Homodimer.

It localises to the cytoplasm. It carries out the reaction glycyl-tRNA(Ala) + H2O = tRNA(Ala) + glycine + H(+). It catalyses the reaction a D-aminoacyl-tRNA + H2O = a tRNA + a D-alpha-amino acid + H(+). Functionally, an aminoacyl-tRNA editing enzyme that deacylates mischarged D-aminoacyl-tRNAs. Also deacylates mischarged glycyl-tRNA(Ala), protecting cells against glycine mischarging by AlaRS. Acts via tRNA-based rather than protein-based catalysis; rejects L-amino acids rather than detecting D-amino acids in the active site. By recycling D-aminoacyl-tRNA to D-amino acids and free tRNA molecules, this enzyme counteracts the toxicity associated with the formation of D-aminoacyl-tRNA entities in vivo and helps enforce protein L-homochirality. This is D-aminoacyl-tRNA deacylase from Psychrobacter arcticus (strain DSM 17307 / VKM B-2377 / 273-4).